Consider the following 557-residue polypeptide: MAADVDKTPAGEQKDDHEDRGTPSSRRGRSRFTQISSLFIIAAIPVIGVCIKYYLDIQFVKRHEAGLKALGADGLFFFSSLDTDHDLYLSPEEFKPIAEKLTGVAPPPEYEEEIPHDPNGETLTLHAKMQPLLLESMTKSKDGFLGVSHSSLSGLRSWKRPAISSSTFYASQFKVFLPPSGKSAVGDTWWIIPSELNIFTGYLPNNRFHPPTPRGKEVLIHSLLSMFHPRPFVKSRFAPQGAVACIRATSDFYYDIVFRIHAEFQLNDVPDFPFWFTPGQFAGHIILSKDASHVRDFHIYVPNDKTLNVDMEWLYGASETSNMEVDIGYLPQMELGAEGPSTPSVIYDEQGNMIDSRGEGGEPIQFVFEEIVWSEELRREEASRRLEVTMYPFKKVPYLPFSEAFSRASAEKKLVHSILLWGALDDQSCUGSGRTLRETVLESSPVLALLNQSFISSWSLVKELEDLQGDVKNVELSEKARLHLEKYTFPVQMMVVLPNGTVVHHINANNFLDQTSMKPEDEGPGLSFSAGFEDPSTSTYIRFLQEGLEKAKPYLES.

Positions 1-21 (MAADVDKTPAGEQKDDHEDRG) are enriched in basic and acidic residues. The tract at residues 1–28 (MAADVDKTPAGEQKDDHEDRGTPSSRRG) is disordered. Residues 35–55 (ISSLFIIAAIPVIGVCIKYYL) form a helical membrane-spanning segment. U430 is a non-standard amino acid (selenocysteine). 2 N-linked (GlcNAc...) asparagine glycosylation sites follow: N451 and N499.

As to quaternary structure, interacts with ryr3.

Its subcellular location is the endoplasmic reticulum membrane. In terms of biological role, plays an important role in cell protection against oxidative stress and in the regulation of redox-related calcium homeostasis. Regulates the calcium level of the ER by protecting the calcium pump ATP2A2 against the oxidoreductase ERO1A-mediated oxidative damage. Acts as a modulator of ryanodine receptor (RyR) activity: protects RyR from oxidation due to increased oxidative stress, or directly controls the RyR redox state, regulating the RyR-mediated calcium mobilization required for normal muscle development and differentiation. Plays an important role in muscle development and differentiation during early development. Required for development of the slow muscle fiber lineage. Required for the correct organization and attachment of the myofibrils, as well as for the continuity and integrity of the connective tissue that forms the myoseptum. This chain is Selenoprotein N, found in Danio rerio (Zebrafish).